A 169-amino-acid polypeptide reads, in one-letter code: NAD(P)H-quinone oxidoreductase subunit J, chloroplastic (169 aa).

Belongs to the complex I 30 kDa subunit family. In terms of assembly, NDH is composed of at least 16 different subunits, 5 of which are encoded in the nucleus.

It localises to the plastid. The protein resides in the chloroplast thylakoid membrane. The enzyme catalyses a plastoquinone + NADH + (n+1) H(+)(in) = a plastoquinol + NAD(+) + n H(+)(out). The catalysed reaction is a plastoquinone + NADPH + (n+1) H(+)(in) = a plastoquinol + NADP(+) + n H(+)(out). Functionally, NDH shuttles electrons from NAD(P)H:plastoquinone, via FMN and iron-sulfur (Fe-S) centers, to quinones in the photosynthetic chain and possibly in a chloroplast respiratory chain. The immediate electron acceptor for the enzyme in this species is believed to be plastoquinone. Couples the redox reaction to proton translocation, and thus conserves the redox energy in a proton gradient. In Physcomitrium patens (Spreading-leaved earth moss), this protein is NAD(P)H-quinone oxidoreductase subunit J, chloroplastic.